The following is a 345-amino-acid chain: GTPase Obg (345 aa).

The Obg domain occupies 1–159; sequence MKFIDEAIIK…RTLRLELKLL (159 aa). The interval 127-148 is disordered; sequence NARFKSSTNRAPRKTTQGKPGE. A compositionally biased stretch (polar residues) spans 130-144; the sequence is FKSSTNRAPRKTTQG. The region spanning 160-334 is the OBG-type G domain; it reads ADVGLLGLPN…LIHAVMQYLE (175 aa). Residues 166 to 173, 191 to 195, 213 to 216, 284 to 287, and 315 to 317 each bind GTP; these read GLPNAGKS, FTTLH, DIPG, NKTD, and SAL. Residues S173 and T193 each contribute to the Mg(2+) site.

Belongs to the TRAFAC class OBG-HflX-like GTPase superfamily. OBG GTPase family. Monomer. Mg(2+) is required as a cofactor.

Its subcellular location is the cytoplasm. Its function is as follows. An essential GTPase which binds GTP, GDP and possibly (p)ppGpp with moderate affinity, with high nucleotide exchange rates and a fairly low GTP hydrolysis rate. Plays a role in control of the cell cycle, stress response, ribosome biogenesis and in those bacteria that undergo differentiation, in morphogenesis control. This chain is GTPase Obg, found in Nitrosococcus oceani (strain ATCC 19707 / BCRC 17464 / JCM 30415 / NCIMB 11848 / C-107).